The primary structure comprises 546 residues: Protein RDR1 (546 aa).

Residues 20–46 (CVPCRERKRKCNGKSPCEMCVAYGYVC) constitute a DNA-binding region (zn(2)-C6 fungal-type).

It localises to the nucleus. Functionally, transcriptional repressor of multidrug resistance genes, such as PDR5. Required for growth on non-fermentable carbon sources like lactate or glycerol. The protein is Protein RDR1 (RDR1) of Saccharomyces cerevisiae (strain ATCC 204508 / S288c) (Baker's yeast).